The primary structure comprises 188 residues: Large ribosomal subunit protein eL18 (188 aa).

The interval 147–188 is disordered; that stretch reads EANKHFGPAPGVPHSHTKAHVRSKGRQFERARGRRTSKGYKK. 2 stretches are compositionally biased toward basic residues: residues 161–171 and 178–188; these read SHTKAHVRSKG and RGRRTSKGYKK.

This sequence belongs to the eukaryotic ribosomal protein eL18 family.

It is found in the cytoplasm. This chain is Large ribosomal subunit protein eL18 (RpL18), found in Diaphorina citri (Asian citrus psyllid).